We begin with the raw amino-acid sequence, 417 residues long: Gamma-glutamyl phosphate reductase (417 aa).

This sequence belongs to the gamma-glutamyl phosphate reductase family.

The protein resides in the cytoplasm. It catalyses the reaction L-glutamate 5-semialdehyde + phosphate + NADP(+) = L-glutamyl 5-phosphate + NADPH + H(+). It participates in amino-acid biosynthesis; L-proline biosynthesis; L-glutamate 5-semialdehyde from L-glutamate: step 2/2. Its function is as follows. Catalyzes the NADPH-dependent reduction of L-glutamate 5-phosphate into L-glutamate 5-semialdehyde and phosphate. The product spontaneously undergoes cyclization to form 1-pyrroline-5-carboxylate. The chain is Gamma-glutamyl phosphate reductase from Desulfitobacterium hafniense (strain Y51).